We begin with the raw amino-acid sequence, 362 residues long: Biotin synthase (362 aa).

The Radical SAM core domain maps to 46–273 (NEVQVSTLLS…ASHVRLSAGR (228 aa)). Residues C61, C65, and C68 each contribute to the [4Fe-4S] cluster site. C105, C136, C196, and R268 together coordinate [2Fe-2S] cluster. The tract at residues 320–339 (PAQRAQKPDQVQEEELLAEV) is disordered.

This sequence belongs to the radical SAM superfamily. Biotin synthase family. In terms of assembly, homodimer. [4Fe-4S] cluster serves as cofactor. The cofactor is [2Fe-2S] cluster.

It catalyses the reaction (4R,5S)-dethiobiotin + (sulfur carrier)-SH + 2 reduced [2Fe-2S]-[ferredoxin] + 2 S-adenosyl-L-methionine = (sulfur carrier)-H + biotin + 2 5'-deoxyadenosine + 2 L-methionine + 2 oxidized [2Fe-2S]-[ferredoxin]. It functions in the pathway cofactor biosynthesis; biotin biosynthesis; biotin from 7,8-diaminononanoate: step 2/2. Catalyzes the conversion of dethiobiotin (DTB) to biotin by the insertion of a sulfur atom into dethiobiotin via a radical-based mechanism. In Aeromonas hydrophila subsp. hydrophila (strain ATCC 7966 / DSM 30187 / BCRC 13018 / CCUG 14551 / JCM 1027 / KCTC 2358 / NCIMB 9240 / NCTC 8049), this protein is Biotin synthase.